The sequence spans 596 residues: Aspartic proteinase MKC7 (596 aa).

An N-terminal signal peptide occupies residues 1 to 22; it reads MKLSVLTFVVDALLVCSSIVDA. The propeptide occupies 23–65; the sequence is GVTDFPSLPSNEVYVKMNFQKKYGSSFENALDDTKGRTRLMTR. A Peptidase A1 domain is found at 81–468; that stretch reads YSVELDIGTP…DLDNMEISMA (388 aa). Residue Asp-99 is part of the active site. Residues Asn-180, Asn-190, Asn-219, Asn-229, Asn-232, Asn-286, and Asn-346 are each glycosylated (N-linked (GlcNAc...) asparagine). Residue Asp-360 is part of the active site. 2 N-linked (GlcNAc...) asparagine glycosylation sites follow: Asn-471 and Asn-517. Residues 530–570 show a composition bias toward low complexity; the sequence is ATSSSSSKGQKTQTSTTALSISKSTSSTSSTGMLSPTSSSS. A disordered region spans residues 530-578; the sequence is ATSSSSSKGQKTQTSTTALSISKSTSSTSSTGMLSPTSSSSTRKENGGH. Asn-575 is lipidated: GPI-anchor amidated asparagine. Positions 576-596 are cleaved as a propeptide — removed in mature form; that stretch reads GGHNLNPPFFARFITAIFHHI.

Belongs to the peptidase A1 family.

The protein localises to the cell membrane. The enzyme catalyses Hydrolyzes various precursor proteins with Arg or Lys in P1, and commonly Arg or Lys also in P2. The P3 amino acid is usually non-polar, but otherwise additional basic amino acids are favorable in both non-prime and prime positions.. Functionally, cleaves proteins C-terminally to the most C-terminal basic residue. Can process the alpha-mating factor precursor. Required for cell wall integrity. The chain is Aspartic proteinase MKC7 (MKC7) from Saccharomyces cerevisiae (strain ATCC 204508 / S288c) (Baker's yeast).